The sequence spans 97 residues: C-C motif chemokine 7 (97 aa).

Positions 1–23 (MRISATLLCLLLIAAAFSIQVWA) are cleaved as a signal peptide. Position 24 is a pyrrolidone carboxylic acid (glutamine 24). N-linked (GlcNAc...) asparagine glycosylation occurs at asparagine 29. Intrachain disulfides connect cysteine 33–cysteine 57 and cysteine 34–cysteine 73.

Belongs to the intercrine beta (chemokine CC) family. As to quaternary structure, monomer. Interacts with TNFAIP6 (via Link domain).

Its subcellular location is the secreted. Its function is as follows. Chemotactic factor that attracts monocytes and eosinophils, but not neutrophils. Augments monocyte anti-tumor activity. In Mus musculus (Mouse), this protein is C-C motif chemokine 7 (Ccl7).